The primary structure comprises 553 residues: Solute carrier family 45 member 3 (553 aa).

11 consecutive transmembrane segments (helical) span residues 19 to 39 (LLVN…ITYV), 52 to 72 (FMTM…PLLG), 88 to 108 (FIWA…RAGW), 120 to 140 (LELA…QVCF), 161 to 181 (FSVY…LPAI), 198 to 218 (CLFG…LFVT), 275 to 295 (FVAE…YTDF), 323 to 343 (MGSL…LVMD), 353 to 373 (SVYL…CLSH), 382 to 402 (AALT…LASL), and 522 to 542 (AYMV…TQVV).

It belongs to the glycoside-pentoside-hexuronide (GPH) cation symporter transporter (TC 2.A.2) family. Expressed in the epididymis. Primarily expressed in the prostate, but also in other tissues.

It localises to the membrane. The catalysed reaction is sucrose(out) + H(+)(out) = sucrose(in) + H(+)(in). Functionally, proton-associated sucrose transporter. May be able to transport also glucose and fructose. The protein is Solute carrier family 45 member 3 (Slc45a3) of Mus musculus (Mouse).